Here is a 359-residue protein sequence, read N- to C-terminus: Mannonate dehydratase (359 aa).

Belongs to the mannonate dehydratase family. Fe(2+) serves as cofactor. Mn(2+) is required as a cofactor.

The enzyme catalyses D-mannonate = 2-dehydro-3-deoxy-D-gluconate + H2O. The protein operates within carbohydrate metabolism; pentose and glucuronate interconversion. Catalyzes the dehydration of D-mannonate. The protein is Mannonate dehydratase (uxuA) of Bacillus subtilis (strain 168).